Reading from the N-terminus, the 85-residue chain is Scratcher peptide (85 aa).

Positions 1 to 24 (MTSVQSVTCCCLLWLMLSVQPITP) are cleaved as a signal peptide. Positions 25-38 (GSPGPAQLSRERSF) are excised as a propeptide. E47 carries the post-translational modification 4-carboxyglutamate. Position 67 is an aspartic acid 1-amide (D67). The propeptide occupies 68–85 (KRDVVSPRIRRRKRSKAM).

Belongs to the conotoxin J superfamily. Contains 2 disulfide bonds. In terms of tissue distribution, expressed by the venom duct.

The protein resides in the secreted. Causes scratching in mice. This Conus geographus (Geography cone) protein is Scratcher peptide.